The chain runs to 449 residues: Elongation factor 1-alpha (449 aa).

The tr-type G domain occupies 5–234 (KQHVSIVVIG…DNCDPPKRPV (230 aa)). Residues 14 to 21 (GHVDSGKS) are G1. 14 to 21 (GHVDSGKS) lines the GTP pocket. K55 is subject to N6,N6-dimethyllysine. The G2 stretch occupies residues 70 to 74 (GITID). K79 carries the post-translational modification N6,N6,N6-trimethyllysine. Residues 91 to 94 (DAPG) form a G3 region. GTP contacts are provided by residues 91–95 (DAPGH) and 153–156 (NKMD). A G4 region spans residues 153–156 (NKMD). K187 bears the N6,N6,N6-trimethyllysine mark. The interval 194-196 (SGW) is G5. K265 is modified (N6-methyllysine). An N6,N6,N6-trimethyllysine mark is found at K310 and K400.

It belongs to the TRAFAC class translation factor GTPase superfamily. Classic translation factor GTPase family. EF-Tu/EF-1A subfamily.

The protein resides in the cytoplasm. Its function is as follows. This protein promotes the GTP-dependent binding of aminoacyl-tRNA to the A-site of ribosomes during protein biosynthesis. The polypeptide is Elongation factor 1-alpha (Pyropia yezoensis (Susabi-nori)).